We begin with the raw amino-acid sequence, 100 residues long: Putative exopolysaccharide production repressor protein y4xQ (100 aa).

Helical transmembrane passes span 9-29 (ILWL…GSIS) and 35-55 (TMVG…FLLW). The disordered stretch occupies residues 66–100 (TTGQFHGEEQPGDPRIAGTHGRTDGDPCFEDEDSR).

It to Rhizobium exopolysaccharide production repressor protein (ExoX).

Its subcellular location is the cell membrane. Functionally, could be involved in the inhibition of exopolysaccharide synthesis (EPS) and nodulation ability (nod). The sequence is that of Putative exopolysaccharide production repressor protein y4xQ from Sinorhizobium fredii (strain NBRC 101917 / NGR234).